The following is a 405-amino-acid chain: Na(+)-translocating NADH-quinone reductase subunit F (405 aa).

The chain crosses the membrane as a helical span at residues 3–23; sequence IILGIVMFTVIVLVLALMILF. Residues 32–124 enclose the 2Fe-2S ferredoxin-type domain; sequence GDITIKVNGE…DMDIEVPEEV (93 aa). Residues cysteine 67, cysteine 73, cysteine 76, and cysteine 108 each coordinate [2Fe-2S] cluster. The 141-residue stretch at 127–267 folds into the FAD-binding FR-type domain; the sequence is VKKWECTVIS…SGPFGEFFAK (141 aa). The catalytic stretch occupies residues 270–387; the sequence is DAEMVFIGGG…PIMNQSVIKM (118 aa).

This sequence belongs to the NqrF family. As to quaternary structure, composed of six subunits; NqrA, NqrB, NqrC, NqrD, NqrE and NqrF. It depends on [2Fe-2S] cluster as a cofactor. Requires FAD as cofactor.

Its subcellular location is the cell inner membrane. The enzyme catalyses a ubiquinone + n Na(+)(in) + NADH + H(+) = a ubiquinol + n Na(+)(out) + NAD(+). In terms of biological role, NQR complex catalyzes the reduction of ubiquinone-1 to ubiquinol by two successive reactions, coupled with the transport of Na(+) ions from the cytoplasm to the periplasm. The first step is catalyzed by NqrF, which accepts electrons from NADH and reduces ubiquinone-1 to ubisemiquinone by a one-electron transfer pathway. This is Na(+)-translocating NADH-quinone reductase subunit F from Neisseria meningitidis serogroup B (strain ATCC BAA-335 / MC58).